The primary structure comprises 141 residues: Protein X (141 aa).

The interval 24–52 (QSSGPPFPRPAAGSAASSTSSPSPSDESD) is disordered. Low complexity predominate over residues 33–48 (PAAGSAASSTSSPSPS). The segment at 68-113 (PCCLVFTCADLRTMDSTVNFVSWHAKRQLGMPSKDLWTPYIKDQLL) is mitochondrial targeting sequence.

It belongs to the orthohepadnavirus protein X family. In terms of assembly, may form homodimer. May interact with host CEBPA, CFLAR, CREB1, DDB1, E4F1, HBXIP, HSPD1/HSP60, NFKBIA, POLR2E and SMAD4. Interacts with host SMC5-SMC6 complex and induces its degradation. Interacts with host TRPC4AP; leading to prevent ubiquitination of TRPC4AP. Interacts with host PLSCR1; this interaction promotes ubiquitination and degradation of HBx and impairs HBx-mediated cell proliferation. A fraction may be phosphorylated in insect cells and HepG2 cells, a human hepatoblastoma cell line. Phosphorylated in vitro by host protein kinase C or mitogen-activated protein kinase. N-acetylated in insect cells.

Its subcellular location is the host cytoplasm. It is found in the host nucleus. The protein localises to the host mitochondrion. In terms of biological role, multifunctional protein that plays a role in silencing host antiviral defenses and promoting viral transcription. Does not seem to be essential for HBV infection. May be directly involved in development of cirrhosis and liver cancer (hepatocellular carcinoma). Most of cytosolic activities involve modulation of cytosolic calcium. The effect on apoptosis is controversial depending on the cell types in which the studies have been conducted. May induce apoptosis by localizing in mitochondria and causing loss of mitochondrial membrane potential. May also modulate apoptosis by binding host CFLAR, a key regulator of the death-inducing signaling complex (DISC). Promotes viral transcription by using the host E3 ubiquitin ligase DDB1 to target the SMC5-SMC6 complex to proteasomal degradation. This host complex would otherwise bind to viral episomal DNA, and prevents its transcription. Moderately stimulates transcription of many different viral and cellular transcription elements. Promoters and enhancers stimulated by HBx contain DNA binding sites for NF-kappa-B, AP-1, AP-2, c-EBP, ATF/CREB, or the calcium-activated factor NF-AT. The sequence is that of Protein X from Marmota monax (Woodchuck).